Consider the following 701-residue polypeptide: Meprin A subunit beta (701 aa).

The first 22 residues, 1-22 (MDLWNLSWFLFLDALLVISGLA), serve as a signal peptide directing secretion. Residues 23-61 (TPENFDVDGGMDQDIFDINEGLGLDLFEGDIRLDRAQIR) constitute a propeptide that is removed on maturation. The Extracellular portion of the chain corresponds to 23–652 (TPENFDVDGG…CEKRGSTRDT (630 aa)). Residues 62–256 (NSIIGEKYRW…LKLNQLYNCS (195 aa)) enclose the Peptidase M12A domain. 3 disulfides stabilise this stretch: cysteine 103–cysteine 255, cysteine 124–cysteine 144, and cysteine 265–cysteine 427. Histidine 152 lines the Zn(2+) pocket. Glutamate 153 is a catalytic residue. Histidine 156 and histidine 162 together coordinate Zn(2+). Asparagine 218, asparagine 254, asparagine 370, asparagine 421, asparagine 436, asparagine 445, asparagine 547, and asparagine 592 each carry an N-linked (GlcNAc...) asparagine glycan. One can recognise an MAM domain in the interval 260-429 (SFMDSCSFEL…INLSETRCPH (170 aa)). One can recognise an MATH domain in the interval 430–585 (HIWHIRNFTQ…GDDVYILLTV (156 aa)). The O-linked (GalNAc...) serine glycan is linked to serine 593. O-linked (GalNAc...) threonine glycans are attached at residues threonine 594 and threonine 599. Positions 595 to 607 (QIQLTPAPSVQDL) are required for proteolytic processing. Serine 603 is a glycosylation site (O-linked (GalNAc...) serine). Residues 604-644 (VQDLCSKTTCKNDGVCTVRDGKAECRCQSGEDWWYMGERCE) enclose the EGF-like domain. Cystine bridges form between cysteine 608/cysteine 619, cysteine 613/cysteine 628, and cysteine 630/cysteine 643. The chain crosses the membrane as a helical span at residues 653–673 (IVIAVSSTVAVFALMLIITLV). Topologically, residues 674-701 (SVYCTRKKYRERMSSNRPNLTPQNQHAF) are cytoplasmic. Threonine 694 is modified (phosphothreonine).

As to quaternary structure, homotetramer consisting of disulfide-linked beta subunits, or heterotetramer of two alpha and two beta subunits formed by non-covalent association of two disulfide-linked heterodimers. Interacts with MBL2 through its carbohydrate moiety. This interaction may inhibit its catalytic activity. Interacts with TSPAN8. The cofactor is Zn(2+). Phosphorylated by PKC at multiple sites of its cytoplasmic part. Phosphorylation dcreases activity at the cell surface, leading to diminished substrate cleavage. In terms of processing, N-glycosylated; contains high mannose and/or complex biantennary structures. Post-translationally, O-glycosylation protect the C-terminal region from proteolytic cleavage and diminish secretion, this seems to be specific to human. Proteolytically activated by trypsin in the intestinal lumen and kallikrein-related peptidases in other tissues. As to expression, the major site of expression is the brush border membrane of small intestinal and kidney epithelial cells.

It is found in the cell membrane. The protein resides in the secreted. The catalysed reaction is Hydrolysis of proteins, including azocasein, and peptides. Hydrolysis of 5-His-|-Leu-6, 6-Leu-|-Cys-7, 14-Ala-|-Leu-15 and 19-Cys-|-Gly-20 bonds in insulin B chain.. With respect to regulation, strongly inhibited by fetuin-A/AHSG. In terms of biological role, membrane metallopeptidase that sheds many membrane-bound proteins. Exhibits a strong preference for acidic amino acids at the P1' position. Known substrates include: FGF19, VGFA, IL1B, IL18, procollagen I and III, E-cadherin, KLK7, gastrin, ADAM10, tenascin-C. The presence of several pro-inflammatory cytokine among substrates implicate MEP1B in inflammation. It is also involved in tissue remodeling due to its capability to degrade extracellular matrix components. Also cleaves the amyloid precursor protein/APP, thereby releasing neurotoxic amyloid beta peptides. The sequence is that of Meprin A subunit beta (MEP1B) from Homo sapiens (Human).